Consider the following 424-residue polypeptide: 5,5'-dehydrodivanillate O-demethylase oxygenase subunit (424 aa).

The region spanning 27-135 (WHPIGGESEF…VRALGGLLWA (109 aa)) is the Rieske domain. Cysteine 68, histidine 70, cysteine 87, and histidine 90 together coordinate [2Fe-2S] cluster. Histidine 181, histidine 186, and aspartate 306 together coordinate Fe cation.

Belongs to the bacterial ring-hydroxylating dioxygenase alpha subunit family. Homotrimer. The three-component monooxygenase is composed of an oxygenase (LigXa), a ferredoxin (LigXc) and a ferredoxin reductase (LigXd). The cofactor is [2Fe-2S] cluster. Fe cation serves as cofactor.

It carries out the reaction 5,5'-dehydrodivanillate + NADH + O2 + H(+) = 2,2',3-trihydroxy-3'-methoxy-5,5'-dicarboxybiphenyl + formaldehyde + NAD(+) + H2O. Involved in the catabolism of 5,5'-dehydrodivanillate (DDVA), an intermediate in the biodegradation of lignin. Part of a three-component monooxygenase that catalyzes the O-demethylation of DDVA, leading to the formation of 2,2',3-trihydroxy-3'-methoxy-5,5'-dicarboxybiphenyl (OH-DDVA). The chain is 5,5'-dehydrodivanillate O-demethylase oxygenase subunit from Sphingobium sp. (strain NBRC 103272 / SYK-6).